Consider the following 970-residue polypeptide: MLRLSLSPTYSLGFHLLAMMTLLISHVDHITAETEMVEEGNETGECTGSYYCKKGVILPIWEPQDPSFGDKIARATVYFVAMVYMFLGVSIIADRFMSSIEVITSQEKEITIKKPNGETTKTTVRIWNETVSNLTLMALGSSAPEILLSVIEVCGHNFTAGDLGPSTIVGSAAFNMFIIIALCVYVVPDGETRKIKHLRVFFVTAAWSIFAYTWLYIILSVISPGVVEVWEGLLTFFFFPICVVFAWVADRRLLFYKYVYKRYRAGKQRGMIIEHEGDRPSSKTEIEMDGKVVNSHVENFLDGALVLEVDERDQDDEEARREMARILKELKQKHPEKEIEQLIELANYQVLSQQQKSRAFYRIQATRLMTGAGNILKRHAADQARKAVSMHEVNTEVAENDPVSKIFFEQGTYQCLENCGTVALTIIRRGGDLTNTVFVDFRTEDGTANAGSDYEFTEGTVVFKPGETQKEIRVGIIDDDIFEEDENFLVHLSNVKVSSEASEDGILEANHISTLACLGSPSTATVTIFDDDHAGIFTFEEPVTHVSESIGIMEVKVLRTSGARGNVIVPYKTIEGTARGGGEDFEDTCGELEFQNDEIVKTISVKVIDDEEYEKNKTFFLEIGEPRLVEMSEKKALLLNELGGFTITGKHLYGQPVLRKVHARDHPIPSTVITIADEYDDKQPLTSKEEEERRIAELGRPILGEHTKLEVIIEESYEFKSTVDKLIKKTNLALVVGTNSWREQFIEAITVSAGEDDDDDECGEEKLPSCFDYVMHFLTVFWKVLFAFVPPTEYWNGWACFIVSILMIGLLTAFIGDLASHFGCTIGLKDSVTAVVFVALGTSVPDTFASKVAATQDQYADASIGNVTGSNAVNVFLGIGVAWSIAAIYHAANGEQFKVSPGTLAFSVTLFTIFAFINVGVLLYRRRPEIGGELGGPRTAKLLTSCLFVLLWLLYIFFSSLEAYCHIKGF.

Positions 1-32 are cleaved as a signal peptide; that stretch reads MLRLSLSPTYSLGFHLLAMMTLLISHVDHITA. Over 33-71 the chain is Extracellular; sequence ETEMVEEGNETGECTGSYYCKKGVILPIWEPQDPSFGDK. Asparagine 41 is a glycosylation site (N-linked (GlcNAc...) asparagine). A helical membrane pass occupies residues 72–92; it reads IARATVYFVAMVYMFLGVSII. Over 93–133 the chain is Cytoplasmic; it reads ADRFMSSIEVITSQEKEITIKKPNGETTKTTVRIWNETVSN. Residues 134-154 traverse the membrane as a helical segment; it reads LTLMALGSSAPEILLSVIEVC. The stretch at 138–178 is one Alpha-1 repeat; sequence ALGSSAPEILLSVIEVCGHNFTAGDLGPSTIVGSAAFNMFI. The Extracellular segment spans residues 155–167; that stretch reads GHNFTAGDLGPST. N-linked (GlcNAc...) asparagine glycosylation is present at asparagine 157. Residues 168–188 traverse the membrane as a helical segment; the sequence is IVGSAAFNMFIIIALCVYVVP. At 189–201 the chain is on the cytoplasmic side; it reads DGETRKIKHLRVF. Residues 202–222 traverse the membrane as a helical segment; sequence FVTAAWSIFAYTWLYIILSVI. Over 223–228 the chain is Extracellular; sequence SPGVVE. The helical transmembrane segment at 229-249 threads the bilayer; the sequence is VWEGLLTFFFFPICVVFAWVA. Residues 250–797 lie on the Cytoplasmic side of the membrane; it reads DRRLLFYKYV…FVPPTEYWNG (548 aa). Residues 251 to 270 are putative calmodulin-binding region; it reads RRLLFYKYVYKRYRAGKQRG. A phosphoserine mark is found at serine 282 and serine 389. Calx-beta domains are found at residues 393 to 493 and 524 to 624; these read VNTE…VHLS and ATVT…LEIG. Ca(2+) is bound by residues glutamate 417, aspartate 453, aspartate 478, aspartate 479, isoleucine 481, glutamate 483, glutamate 486, aspartate 530, aspartate 531, aspartate 532, glutamate 548, aspartate 584, aspartate 610, glutamate 611, glutamate 612, and glutamate 715. Residues 798 to 818 traverse the membrane as a helical segment; that stretch reads WACFIVSILMIGLLTAFIGDL. Over 819–821 the chain is Extracellular; the sequence is ASH. A helical transmembrane segment spans residues 822 to 842; it reads FGCTIGLKDSVTAVVFVALGT. Residues 839–875 form an Alpha-2 repeat; that stretch reads ALGTSVPDTFASKVAATQDQYADASIGNVTGSNAVNV. Residues 843–871 are Cytoplasmic-facing; sequence SVPDTFASKVAATQDQYADASIGNVTGSN. A helical membrane pass occupies residues 872-892; it reads AVNVFLGIGVAWSIAAIYHAA. The Extracellular portion of the chain corresponds to 893–903; the sequence is NGEQFKVSPGT. The helical transmembrane segment at 904–924 threads the bilayer; that stretch reads LAFSVTLFTIFAFINVGVLLY. Residues 925–941 lie on the Cytoplasmic side of the membrane; that stretch reads RRRPEIGGELGGPRTAK. A helical transmembrane segment spans residues 942 to 962; that stretch reads LLTSCLFVLLWLLYIFFSSLE. The Extracellular portion of the chain corresponds to 963 to 970; that stretch reads AYCHIKGF.

The protein belongs to the Ca(2+):cation antiporter (CaCA) (TC 2.A.19) family. SLC8 subfamily.

The protein resides in the cell membrane. It carries out the reaction Ca(2+)(in) + 3 Na(+)(out) = Ca(2+)(out) + 3 Na(+)(in). Its activity is regulated as follows. Activated by micromolar levels of Ca(2+). In terms of biological role, mediates the exchange of one Ca(2+) ion against three to four Na(+) ions across the cell membrane, and thereby contributes to the regulation of cytoplasmic Ca(2+) levels and Ca(2+)-dependent cellular processes. Contributes to Ca(2+) transport during excitation-contraction coupling in muscle. In a first phase, voltage-gated channels mediate the rapid increase of cytoplasmic Ca(2+) levels due to release of Ca(2+) stores from the endoplasmic reticulum. SLC8A1 mediates the export of Ca(2+) from the cell during the next phase, so that cytoplasmic Ca(2+) levels rapidly return to baseline. Required for normal embryonic heart development and the onset of heart contractions. The chain is Sodium/calcium exchanger 1 (SLC8A1) from Cavia porcellus (Guinea pig).